Reading from the N-terminus, the 179-residue chain is Peptide methionine sulfoxide reductase MsrA (179 aa).

The active site involves Cys-14.

Belongs to the MsrA Met sulfoxide reductase family.

The enzyme catalyses L-methionyl-[protein] + [thioredoxin]-disulfide + H2O = L-methionyl-(S)-S-oxide-[protein] + [thioredoxin]-dithiol. It carries out the reaction [thioredoxin]-disulfide + L-methionine + H2O = L-methionine (S)-S-oxide + [thioredoxin]-dithiol. In terms of biological role, has an important function as a repair enzyme for proteins that have been inactivated by oxidation. Catalyzes the reversible oxidation-reduction of methionine sulfoxide in proteins to methionine. The sequence is that of Peptide methionine sulfoxide reductase MsrA from Nitrobacter winogradskyi (strain ATCC 25391 / DSM 10237 / CIP 104748 / NCIMB 11846 / Nb-255).